The following is a 358-amino-acid chain: Peptide chain release factor 1 (358 aa).

The residue at position 233 (glutamine 233) is an N5-methylglutamine.

Belongs to the prokaryotic/mitochondrial release factor family. Post-translationally, methylated by PrmC. Methylation increases the termination efficiency of RF1.

It localises to the cytoplasm. Its function is as follows. Peptide chain release factor 1 directs the termination of translation in response to the peptide chain termination codons UAG and UAA. This Listeria innocua serovar 6a (strain ATCC BAA-680 / CLIP 11262) protein is Peptide chain release factor 1.